Here is a 356-residue protein sequence, read N- to C-terminus: 45 kDa calcium-binding protein (356 aa).

The first 29 residues, Met1–Ala29, serve as a signal peptide directing secretion. An N-linked (GlcNAc...) asparagine glycan is attached at Asn33. 5 EF-hand domains span residues Lys92–Glu127, Glu131–Leu166, Met227–Asn262, Trp272–Tyr307, and Asn308–Ser343. Asp105, Asp107, Asp109, Lys111, Glu116, Asp144, Asp146, Asp148, His150, Glu155, Asp240, Asp242, Asp244, Lys246, Glu251, Asp285, Asn287, Asp289, Glu296, Asp321, Asn323, Asn325, His327, and Glu332 together coordinate Ca(2+).

The protein belongs to the CREC family.

It localises to the golgi apparatus lumen. Functionally, may regulate calcium-dependent activities in the endoplasmic reticulum lumen or post-ER compartment. The protein is 45 kDa calcium-binding protein (SDF4) of Gallus gallus (Chicken).